The sequence spans 137 residues: Putative nickel-responsive regulator (137 aa).

4 residues coordinate Ni(2+): H79, H90, H92, and C98.

The protein belongs to the transcriptional regulatory CopG/NikR family. It depends on Ni(2+) as a cofactor.

Functionally, transcriptional regulator. The polypeptide is Putative nickel-responsive regulator (Campylobacter concisus (strain 13826)).